The sequence spans 1059 residues: Tyrosine-protein kinase-like otk (1059 aa).

Positions 1–23 (MDMLMMWSICLFVCIFMAPFSCG) are cleaved as a signal peptide. Over 24–597 (SGSSSRFIQV…GDGGFLATRA (574 aa)) the chain is Extracellular. Ig-like C2-type domains are found at residues 28 to 112 (SRFI…REAS), 113 to 202 (PTAK…RVMS), 258 to 377 (PEGL…LAIN), 380 to 475 (PGIL…VSIN), and 480 to 570 (PKFS…AVLT). N42 carries an N-linked (GlcNAc...) asparagine glycan. 4 cysteine pairs are disulfide-bonded: C49-C99, C141-C191, C283-C366, and C411-C459. N-linked (GlcNAc...) asparagine glycans are attached at residues N348, N429, N441, N456, N469, N524, and N536. The cysteines at positions 502 and 554 are disulfide-linked. The helical transmembrane segment at 598–618 (VLITMTVALAYIVLVVGLMLW) threads the bilayer. Over 619–1059 (CRYRRQARKA…ALSKAMQNSE (441 aa)) the chain is Cytoplasmic. The tract at residues 639–695 (GGEQAGGEGSTSGNPKASEQEPCLGKQQRNGRNGKSKSNGDPQKSDDTACSQQSRAS) is disordered. A compositionally biased stretch (polar residues) spans 665–693 (QQRNGRNGKSKSNGDPQKSDDTACSQQSR). S698 bears the Phosphoserine mark. One can recognise a Protein kinase; inactive domain in the interval 712–1055 (LSELIQIGRG…QLGAALSKAM (344 aa)). The tract at residues 739-781 (AQANDKDSDNDKQHSNSENGSGGSSGSTTLSTLNEKRRSKTSM) is disordered. Basic and acidic residues predominate over residues 742–753 (NDKDSDNDKQHS).

It belongs to the protein kinase superfamily. Tyr protein kinase family. Insulin receptor subfamily. Interacts with plexA; component of a receptor complex that mediates the repulsive signaling in response to Semaphorin ligands.

The protein localises to the cell membrane. Functionally, acts as a calcium-dependent, homophilic cell adhesion molecule that regulates neural recognition during the development of the nervous system. Component of the repulsive Plexin signaling response to regulate motor axon guidance at the embryonic stage. Also component of a receptor complex that is required in the adult visual system to innervate the lamina layer; specific targeting of R1-R6 axons. This Drosophila willistoni (Fruit fly) protein is Tyrosine-protein kinase-like otk.